The primary structure comprises 139 residues: Large ribosomal subunit protein bL17 (139 aa).

This sequence belongs to the bacterial ribosomal protein bL17 family. Part of the 50S ribosomal subunit. Contacts protein L32.

In Myxococcus xanthus (strain DK1622), this protein is Large ribosomal subunit protein bL17.